Here is a 162-residue protein sequence, read N- to C-terminus: MYVELVDETGQVPSEIIEQTKEVLAFAAKKLDLKESTEMSVTFVDNARSHELNLQYRETDRPTDVISLEYKPDESEFFFDEDMELPEELLEEMDPFIGELFISIDKAAEQAADYGHSIEREYGWLAVHGFLHINGYDHYTPEEESEMFALQEEILTAYGLTR.

Zn(2+) contacts are provided by H128, H132, and H138.

The protein belongs to the endoribonuclease YbeY family. It depends on Zn(2+) as a cofactor.

Its subcellular location is the cytoplasm. Single strand-specific metallo-endoribonuclease involved in late-stage 70S ribosome quality control and in maturation of the 3' terminus of the 16S rRNA. The sequence is that of Endoribonuclease YbeY from Lactococcus lactis subsp. cremoris (strain MG1363).